The primary structure comprises 382 residues: UDP-4-amino-4-deoxy-L-arabinose--oxoglutarate aminotransferase (382 aa).

N6-(pyridoxal phosphate)lysine is present on Lys183.

This sequence belongs to the DegT/DnrJ/EryC1 family. ArnB subfamily. As to quaternary structure, homodimer. Requires pyridoxal 5'-phosphate as cofactor.

The enzyme catalyses UDP-4-amino-4-deoxy-beta-L-arabinose + 2-oxoglutarate = UDP-beta-L-threo-pentopyranos-4-ulose + L-glutamate. It participates in nucleotide-sugar biosynthesis; UDP-4-deoxy-4-formamido-beta-L-arabinose biosynthesis; UDP-4-deoxy-4-formamido-beta-L-arabinose from UDP-alpha-D-glucuronate: step 2/3. The protein operates within bacterial outer membrane biogenesis; lipopolysaccharide biosynthesis. Functionally, catalyzes the conversion of UDP-4-keto-arabinose (UDP-Ara4O) to UDP-4-amino-4-deoxy-L-arabinose (UDP-L-Ara4N). The modified arabinose is attached to lipid A and is required for resistance to polymyxin and cationic antimicrobial peptides. This is UDP-4-amino-4-deoxy-L-arabinose--oxoglutarate aminotransferase from Pseudomonas fluorescens (strain Pf0-1).